The chain runs to 462 residues: Glutamate--tRNA ligase 1 (462 aa).

The short motif at 8-18 (PSPTGYLHIGG) is the 'HIGH' region element. The 'KMSKS' region motif lies at 237–241 (KLSKR). K240 is an ATP binding site.

Belongs to the class-I aminoacyl-tRNA synthetase family. Glutamate--tRNA ligase type 1 subfamily. As to quaternary structure, monomer.

The protein resides in the cytoplasm. It carries out the reaction tRNA(Glu) + L-glutamate + ATP = L-glutamyl-tRNA(Glu) + AMP + diphosphate. Catalyzes the attachment of glutamate to tRNA(Glu) in a two-step reaction: glutamate is first activated by ATP to form Glu-AMP and then transferred to the acceptor end of tRNA(Glu). In Sulfurimonas denitrificans (strain ATCC 33889 / DSM 1251) (Thiomicrospira denitrificans (strain ATCC 33889 / DSM 1251)), this protein is Glutamate--tRNA ligase 1.